Reading from the N-terminus, the 326-residue chain is MTTTLTAPTPAAAEAPRKKWTVAEVQALFDLPFLDLVFQAQQVHRAHFAANEVQRSTLLSIKTGGCSEDCGYCSQSARYDTGLERERLLPLDEVLEHARAAKAKGSSRFCMGAAWRGPKDKDMAPVLEMVREVKKLGLETCVTLGMLKEGQAEQLAEAGLDYYNHNIDTAPEFYGQIVTTHTLQDRLDTLDKVRDAGINVCCGGIVGMGETQTSRAGLIAQLANMTPPPDSVPINNLVAIPGTPLADGGTIDGFDFVRTIAAARITMPTSYVRLSAGRQQMSDEMQALCFMAGANSIFYGERLLTTDNPESDRDDVLFARLGLRSV.

In terms of domain architecture, Radical SAM core spans 51-278; the sequence is NEVQRSTLLS…TSYVRLSAGR (228 aa). Cys66, Cys70, and Cys73 together coordinate [4Fe-4S] cluster. Cys110, Cys141, Cys201, and Arg273 together coordinate [2Fe-2S] cluster.

It belongs to the radical SAM superfamily. Biotin synthase family. Homodimer. [4Fe-4S] cluster serves as cofactor. The cofactor is [2Fe-2S] cluster.

It catalyses the reaction (4R,5S)-dethiobiotin + (sulfur carrier)-SH + 2 reduced [2Fe-2S]-[ferredoxin] + 2 S-adenosyl-L-methionine = (sulfur carrier)-H + biotin + 2 5'-deoxyadenosine + 2 L-methionine + 2 oxidized [2Fe-2S]-[ferredoxin]. Its pathway is cofactor biosynthesis; biotin biosynthesis; biotin from 7,8-diaminononanoate: step 2/2. Functionally, catalyzes the conversion of dethiobiotin (DTB) to biotin by the insertion of a sulfur atom into dethiobiotin via a radical-based mechanism. In Azoarcus sp. (strain BH72), this protein is Biotin synthase.